Here is a 555-residue protein sequence, read N- to C-terminus: Urocanate hydratase (555 aa).

NAD(+) contacts are provided by residues 51-52, glutamine 129, 175-177, glutamate 195, 262-266, 272-273, and tyrosine 321; these read GG, GMG, QTSAH, and YL. The active site involves cysteine 409. An NAD(+)-binding site is contributed by glycine 491.

Belongs to the urocanase family. NAD(+) serves as cofactor.

Its subcellular location is the cytoplasm. It catalyses the reaction 4-imidazolone-5-propanoate = trans-urocanate + H2O. The protein operates within amino-acid degradation; L-histidine degradation into L-glutamate; N-formimidoyl-L-glutamate from L-histidine: step 2/3. Catalyzes the conversion of urocanate to 4-imidazolone-5-propionate. This chain is Urocanate hydratase, found in Stenotrophomonas maltophilia (strain R551-3).